The following is an 806-amino-acid chain: Ankyrin repeat, bromo and BTB domain-containing protein DDB_G0293800 (806 aa).

ANK repeat units lie at residues 1-30, 34-63, 67-96, 100-130, and 134-163; these read MSNK…DVNQ, SNRY…LVNC, RGAT…DVNC, AGST…DVNL, and EGST…RADV. Positions 210-228 are enriched in basic and acidic residues; it reads GVGKKEDDDNNMKIDKQES. The disordered stretch occupies residues 210 to 231; the sequence is GVGKKEDDDNNMKIDKQESEQQ. Positions 239 to 307 constitute a BTB domain; the sequence is SDITFLIENQ…IYTGSIEKFE (69 aa). Disordered regions lie at residues 423–517 and 621–743; these read TRTA…SDSM and QNFP…EERR. 2 stretches are compositionally biased toward low complexity: residues 426-436 and 443-511; these read ANANASNSNQS and TSTT…SSSS. The Bromo domain occupies 516–622; sequence SMNEKNLTFC…NAFDQKFLQN (107 aa). The span at 626–641 shows a compositional bias: pro residues; that stretch reads EKPPTYKPPPPTPTPI. Over residues 642–658 the composition is skewed to low complexity; sequence PTQQQQQQSTSSTSTPT. The segment covering 666–675 has biased composition (basic and acidic residues); the sequence is DEHVKVKEDT. The segment covering 676-693 has biased composition (polar residues); the sequence is NSAQPTSSSSNHTNGENA. Over residues 694 to 733 the composition is skewed to low complexity; that stretch reads SSSSSSSSSKQSNNNNNNNNNNNSNSTTNSSSSSSSTTTT. The NET domain maps to 727-806; sequence SSSTTTTQKK…ECFKKQKQDE (80 aa).

The sequence is that of Ankyrin repeat, bromo and BTB domain-containing protein DDB_G0293800 from Dictyostelium discoideum (Social amoeba).